We begin with the raw amino-acid sequence, 293 residues long: Zinc metalloproteinase nas-2 (293 aa).

A signal peptide spans Met1 to Pro17. Positions Lys18–Arg67 are excised as a propeptide. The region spanning Arg67–Lys260 is the Peptidase M12A domain. A glycan (N-linked (GlcNAc...) asparagine) is linked at Asn111. 2 disulfide bridges follow: Cys114–Cys259 and Cys139–Cys169. His180 serves as a coordination point for Zn(2+). Glu181 is a catalytic residue. 2 residues coordinate Zn(2+): His184 and His190. An N-linked (GlcNAc...) asparagine glycan is attached at Asn287.

Requires Zn(2+) as cofactor.

It localises to the secreted. Functionally, metalloprotease. The polypeptide is Zinc metalloproteinase nas-2 (nas-2) (Caenorhabditis elegans).